The chain runs to 366 residues: tRNA/tmRNA (uracil-C(5))-methyltransferase (366 aa).

S-adenosyl-L-methionine-binding residues include Q190, Y218, N223, E239, and D299. C324 functions as the Nucleophile in the catalytic mechanism. Residue E358 is the Proton acceptor of the active site.

Belongs to the class I-like SAM-binding methyltransferase superfamily. RNA M5U methyltransferase family. TrmA subfamily.

It catalyses the reaction uridine(54) in tRNA + S-adenosyl-L-methionine = 5-methyluridine(54) in tRNA + S-adenosyl-L-homocysteine + H(+). The catalysed reaction is uridine(341) in tmRNA + S-adenosyl-L-methionine = 5-methyluridine(341) in tmRNA + S-adenosyl-L-homocysteine + H(+). Functionally, dual-specificity methyltransferase that catalyzes the formation of 5-methyluridine at position 54 (m5U54) in all tRNAs, and that of position 341 (m5U341) in tmRNA (transfer-mRNA). The sequence is that of tRNA/tmRNA (uracil-C(5))-methyltransferase from Edwardsiella ictaluri (strain 93-146).